Consider the following 277-residue polypeptide: MSALEWFAHKPLGSGIFWIQERFYESGNRANIWLVRGSQRDLVIDAGLGLRSLPDYLRAAGLLAPPDGAGPRPLLAVATHVHFDHSGGLQHFEEVAVHSAEAAALLRGDNYEAVTWLSDREVTRPPRPGWRARHFCVPPVRPSRLLQEGDVISLGDRQLTVMHMPGHSRGSICLHDREHKILFSGDVVYDGSMIDWLPYSNVSDYVVSCQRLMELVDRGLVEKVLPGHFNMFGAERLYRLASNYISKAGICHKVSTCAMRSIASIALHLTNSRGTSS.

7 residues coordinate Zn(2+): H80, H82, D84, H85, H167, D186, and H228.

It belongs to the metallo-beta-lactamase superfamily. Glyoxalase II family. Zn(2+) serves as cofactor.

The protein resides in the endoplasmic reticulum membrane. The protein localises to the cell membrane. It carries out the reaction hexadecanoyl-CoA + H2O = hexadecanoate + CoA + H(+). It catalyses the reaction dodecanoyl-CoA + H2O = dodecanoate + CoA + H(+). The catalysed reaction is tetradecanoyl-CoA + H2O = tetradecanoate + CoA + H(+). The enzyme catalyses octadecanoyl-CoA + H2O = octadecanoate + CoA + H(+). It carries out the reaction a beta-lactam + H2O = a substituted beta-amino acid. Its function is as follows. Acyl-CoA thioesterases are a group of enzymes that catalyze the hydrolysis of acyl-CoAs to the free fatty acid and coenzyme A (CoASH), providing the potential to regulate intracellular levels of acyl-CoAs, free fatty acids and CoASH. Has an acyl-CoA thioesterase activity towards the long chain fatty acyl-CoA thioester palmitoyl-CoA (hexadecanoyl-CoA; C16:0-CoA). Displays a substrate preference for fatty acyl-CoAs with chain-lengths C12-C18. The protein is Acyl-coenzyme A thioesterase MBLAC2 (MBLAC2) of Gallus gallus (Chicken).